A 429-amino-acid polypeptide reads, in one-letter code: Phosphoribosylamine--glycine ligase (429 aa).

Positions K109–D316 constitute an ATP-grasp domain. V135–S196 provides a ligand contact to ATP. Positions S212–S234 are disordered. The span at Q213–T223 shows a compositional bias: basic and acidic residues. Mg(2+)-binding residues include E286 and N288.

The protein belongs to the GARS family. The cofactor is Mg(2+). Mn(2+) is required as a cofactor.

It carries out the reaction 5-phospho-beta-D-ribosylamine + glycine + ATP = N(1)-(5-phospho-beta-D-ribosyl)glycinamide + ADP + phosphate + H(+). It functions in the pathway purine metabolism; IMP biosynthesis via de novo pathway; N(1)-(5-phospho-D-ribosyl)glycinamide from 5-phospho-alpha-D-ribose 1-diphosphate: step 2/2. The chain is Phosphoribosylamine--glycine ligase from Vibrio vulnificus (strain CMCP6).